A 1379-amino-acid chain; its full sequence is Vascular endothelial growth factor receptor 3 (1379 aa).

The signal sequence occupies residues 1 to 19; that stretch reads MKRVCTLPLWLWLGIVSEA. Residues 20 to 788 lie on the Extracellular side of the membrane; it reads DLVSSYSMTP…EGSDDKTNVE (769 aa). Ig-like C2-type domains lie at 30-136, 160-222, 240-335, 340-421, 430-566, 569-684, and 691-777; these read PTLS…TAVS, KENT…IDNK, DIQL…TDVI, PFIN…KRIS, PRIH…FYVT, PDGF…KYIS, and PRLK…ASVS. Intrachain disulfides connect Cys51–Cys120 and Cys167–Cys215. The interval 73–93 is disordered; it reads RRWNSQPQQRPVGAGNPEEDC. Residues Asn113, Asn175, Asn260, and Asn308 are each glycosylated (N-linked (GlcNAc...) asparagine). Cys261 and Cys319 are joined by a disulfide. 3 cysteine pairs are disulfide-bonded: Cys453–Cys548, Cys474–Cys500, and Cys592–Cys666. N-linked (GlcNAc...) asparagine glycans are attached at residues Asn529, Asn541, Asn596, Asn608, Asn655, Asn696, and Asn703. A disulfide bridge connects residues Cys712 and Cys761. A glycan (N-linked (GlcNAc...) asparagine) is linked at Asn771. Residues 789-809 form a helical membrane-spanning segment; it reads IVILIGTGVIAVFFWILLIII. Residues 810–1379 are Cytoplasmic-facing; sequence FCNIKRPAHA…LHASFFSEQY (570 aa). The Protein kinase domain occupies 858-1185; that stretch reads LRLGKVLGHG…DLVEILGNLL (328 aa). Residues 864 to 872 and Lys892 contribute to the ATP site; that span reads LGHGAFGKV. The Proton acceptor role is filled by Asp1049. 2 positions are modified to phosphotyrosine; by autocatalysis: Tyr1075 and Tyr1080. The tract at residues 1196 to 1224 is disordered; the sequence is YIPLNDSHSSEDDGFSQVPSSAQQNSDEE. Tyr1239, Tyr1240, Tyr1274, Tyr1342, and Tyr1346 each carry phosphotyrosine; by autocatalysis. The disordered stretch occupies residues 1299–1379; sequence RHRKEGGFSS…LHASFFSEQY (81 aa). The segment covering 1332–1343 has biased composition (polar residues); sequence YGSQVGGQTFYN.

The protein belongs to the protein kinase superfamily. Tyr protein kinase family. CSF-1/PDGF receptor subfamily. As to quaternary structure, interacts with VEGFC and VEGFD. Monomer in the absence of bound VEGFC or VEGFD. Homodimer in the presence of bound VEGFC or VEGFD. In terms of processing, autophosphorylated on tyrosine residues upon ligand binding. Autophosphorylation occurs in trans, i.e. one subunit of the dimeric receptor phosphorylates tyrosine residues on the other subunit.

The protein resides in the cell membrane. It is found in the cytoplasm. The protein localises to the nucleus. It catalyses the reaction L-tyrosyl-[protein] + ATP = O-phospho-L-tyrosyl-[protein] + ADP + H(+). With respect to regulation, present in an inactive conformation in the absence of bound ligand. Binding of VEGFC or VEGFD leads to dimerization and activation by autophosphorylation on tyrosine residues. Tyrosine-protein kinase that acts as a cell-surface receptor for VEGFC and VEGFD, and plays an essential role in lymphangiogenesis and in the development of the vascular network and the cardiovascular system during embryonic development. Promotes proliferation, survival and migration of endothelial cells, and regulates angiogenic sprouting. Mediates activation of the MAPK1/ERK2, MAPK3/ERK1 signaling pathway, of MAPK8 and the JUN signaling pathway, and of the AKT1 signaling pathway. The chain is Vascular endothelial growth factor receptor 3 (FLT4) from Coturnix coturnix (Common quail).